We begin with the raw amino-acid sequence, 176 residues long: 3-hydroxydecanoyl-[acyl-carrier-protein] dehydratase (176 aa).

Histidine 75 is a catalytic residue.

This sequence belongs to the thioester dehydratase family. FabA subfamily. As to quaternary structure, homodimer.

Its subcellular location is the cytoplasm. It carries out the reaction a (3R)-hydroxyacyl-[ACP] = a (2E)-enoyl-[ACP] + H2O. The catalysed reaction is (3R)-hydroxydecanoyl-[ACP] = (2E)-decenoyl-[ACP] + H2O. The enzyme catalyses (2E)-decenoyl-[ACP] = (3Z)-decenoyl-[ACP]. It functions in the pathway lipid metabolism; fatty acid biosynthesis. Necessary for the introduction of cis unsaturation into fatty acids. Catalyzes the dehydration of (3R)-3-hydroxydecanoyl-ACP to E-(2)-decenoyl-ACP and then its isomerization to Z-(3)-decenoyl-ACP. Can catalyze the dehydratase reaction for beta-hydroxyacyl-ACPs with saturated chain lengths up to 16:0, being most active on intermediate chain length. This is 3-hydroxydecanoyl-[acyl-carrier-protein] dehydratase from Haemophilus ducreyi (strain 35000HP / ATCC 700724).